The sequence spans 803 residues: Phenylalanine--tRNA ligase beta subunit (803 aa).

One can recognise a tRNA-binding domain in the interval 39–152 (TPGFQKVVAG…PDASPGADAA (114 aa)). The 75-residue stretch at 406 to 480 (RQPVTIELRP…RLYGYNRIPV (75 aa)) folds into the B5 domain. Positions 458, 464, 467, and 468 each coordinate Mg(2+). Residues 709-802 (PRFPAVERDL…LEERLGASLR (94 aa)) enclose the FDX-ACB domain.

It belongs to the phenylalanyl-tRNA synthetase beta subunit family. Type 1 subfamily. As to quaternary structure, tetramer of two alpha and two beta subunits. Mg(2+) serves as cofactor.

The protein resides in the cytoplasm. The enzyme catalyses tRNA(Phe) + L-phenylalanine + ATP = L-phenylalanyl-tRNA(Phe) + AMP + diphosphate + H(+). In Moorella thermoacetica (strain ATCC 39073 / JCM 9320), this protein is Phenylalanine--tRNA ligase beta subunit.